Reading from the N-terminus, the 129-residue chain is Mitochondrial pyruvate carrier 2 (129 aa).

Over 2-22 (STSSVRFAFRRFWQSETGPKT) the chain is Mitochondrial matrix. The chain crosses the membrane as a helical span at residues 23–39 (VHFWAPTLKWGLVFAGF). The Mitochondrial intermembrane segment spans residues 40–54 (SDMKRPVEKISGAQN). Residues 55-71 (LSLLSTALIWTRWSFVI) form a helical membrane-spanning segment. Over 72–74 (KPR) the chain is Mitochondrial matrix. Residues 75–91 (NILLASVNSFLCLTAGY) form a helical membrane-spanning segment. The Mitochondrial intermembrane portion of the chain corresponds to 92-129 (QLGRIANYRIRNGDSISQLCSYILSGADESKKEITTGR).

Belongs to the mitochondrial pyruvate carrier (MPC) (TC 2.A.105) family. In terms of assembly, the functional 150 kDa pyruvate import complex is a heteromer of MPC1 and either MPC2 or MPC3.

It is found in the mitochondrion. Its subcellular location is the mitochondrion inner membrane. It catalyses the reaction pyruvate(out) + H(+)(out) = pyruvate(in) + H(+)(in). Mediates the uptake of pyruvate into mitochondria. The polypeptide is Mitochondrial pyruvate carrier 2 (Saccharomyces cerevisiae (strain ATCC 204508 / S288c) (Baker's yeast)).